A 367-amino-acid chain; its full sequence is Endopolygalacturonase B (367 aa).

Positions 1 to 17 (MHFQLLGLAALGSLAAA) are cleaved as a signal peptide. Positions 18–30 (APAPSRTSELVER) are excised as a propeptide. Cysteine 34 and cysteine 49 are joined by a disulfide. PbH1 repeat units follow at residues 161-191 (GNDVHLTDITIDNSDGDNNGGHNTDAFDVSE), 192-213 (SNGVYITGANVKNQDDCLAINS), 214-234 (GENIEFTGATCSGGHGISIGS), 243-264 (VKNVKVADSTVVDSDNGIRIKT), and 272-294 (VSGVTYENITLKNIKKNGIVIEQ). Catalysis depends on aspartate 206, which acts as the Proton donor. The cysteines at positions 208 and 224 are disulfide-linked. Residue histidine 228 is part of the active site. N-linked (GlcNAc...) asparagine glycosylation occurs at asparagine 279. 2 disulfides stabilise this stretch: cysteine 334–cysteine 339 and cysteine 358–cysteine 367.

This sequence belongs to the glycosyl hydrolase 28 family.

The protein localises to the secreted. It carries out the reaction (1,4-alpha-D-galacturonosyl)n+m + H2O = (1,4-alpha-D-galacturonosyl)n + (1,4-alpha-D-galacturonosyl)m.. Involved in maceration and soft-rotting of plant tissue. Hydrolyzes the 1,4-alpha glycosidic bonds of de-esterified pectate in the smooth region of the plant cell wall. In Aspergillus flavus (strain ATCC MYA-384 / AF70), this protein is Endopolygalacturonase B (pgaB).